The sequence spans 635 residues: Probable monoacyl phosphatidylinositol tetramannoside-binding protein LpqW (635 aa).

A signal peptide spans 1–26 (MGVPSPVRRVCVTVGALVALACMVLA). Disordered stretches follow at residues 32-52 (PPPA…PRRP), 389-412 (NTSV…GPPE), and 511-551 (NAPT…LVKA). 2 stretches are compositionally biased toward low complexity: residues 390 to 411 (TSVS…TGPP) and 511 to 531 (NAPT…APDT).

This sequence belongs to the bacterial solute-binding protein 5 family.

Its pathway is phospholipid metabolism; phosphatidylinositol metabolism. Functionally, may directly or indirectly regulate the accessibility of the key branch point intermediate, monoacyl phosphatidylinositol tetramannoside (AcPIM4), to the elongating alpha-1,6 mannosyltransferases which could regulate the lipoarabinomannans (LAMs) biosynthesis. The polypeptide is Probable monoacyl phosphatidylinositol tetramannoside-binding protein LpqW (lpqW) (Mycobacterium tuberculosis (strain CDC 1551 / Oshkosh)).